A 250-amino-acid chain; its full sequence is Tripartite motif-containing protein 74 (250 aa).

The segment at 16-57 (CPICLEVFKESLMLQCGHSYCKGCLVSLSYHLDTKVRCPMCW) adopts an RING-type zinc-finger fold. The B box-type zinc-finger motif lies at 84 to 125 (PEPKVCVHHRNPLSLFCEKDQELICGLCGLLGSHQHHPVTPV). Positions 89, 92, 111, and 117 each coordinate Zn(2+). Coiled-coil stretches lie at residues 125–169 (VSTV…NESD) and 204–235 (LVASLDMQLEQAQGTRERLAQAECVLEQFGNE).

The protein belongs to the TRIM/RBCC family.

This chain is Tripartite motif-containing protein 74 (TRIM74), found in Homo sapiens (Human).